Here is a 264-residue protein sequence, read N- to C-terminus: uncharacterized protein (264 aa).

A coiled-coil region spans residues 19-45 (AQEESMEQLKDINTKIDNSEKKISLEN).

This is an uncharacterized protein from Acanthamoeba polyphaga mimivirus (APMV).